Reading from the N-terminus, the 337-residue chain is DNA-directed RNA polymerase subunit alpha (337 aa).

The interval 1–233 is alpha N-terminal domain (alpha-NTD); that stretch reads MVREEVAVST…DLFIPFLHAE (233 aa). The alpha C-terminal domain (alpha-CTD) stretch occupies residues 266 to 337; the sequence is GIALKCIFID…FTIDLPKNKF (72 aa).

This sequence belongs to the RNA polymerase alpha chain family. In terms of assembly, in plastids the minimal PEP RNA polymerase catalytic core is composed of four subunits: alpha, beta, beta', and beta''. When a (nuclear-encoded) sigma factor is associated with the core the holoenzyme is formed, which can initiate transcription.

Its subcellular location is the plastid. The protein localises to the chloroplast. It carries out the reaction RNA(n) + a ribonucleoside 5'-triphosphate = RNA(n+1) + diphosphate. Functionally, DNA-dependent RNA polymerase catalyzes the transcription of DNA into RNA using the four ribonucleoside triphosphates as substrates. The sequence is that of DNA-directed RNA polymerase subunit alpha from Liriodendron tulipifera (Tuliptree).